Reading from the N-terminus, the 481-residue chain is MIEVLLVTICLAVFPYQGSSIILESGNVNDYEVVYPRKVSALPKGAVQPKYEDAMQYEFKVNGEAVVLHLEKNKGLFSEDYSETHYSPDGREITTYPSVEDHCYYHGRIHNDADSTASISACDGLKGYFKLQGETYPIEPLELSDSEAHAVFKYENVEKEDEAPKMCGVTQNWESDESIKKASQLYLTPEQQRFPQRYIKLAIVVDHGMYTKYSSNFKKIRKRVHQMVSNINEMCRPLNIAITLALLDVWSEKDFITVQADAPTTAGLFGDWRERVLLKKKNHDHAQLLTDTNFARNTIGWAYVGRMCDEKYSVAVVKDHSSKVFMVAVTMTHELGHNLGMEHDDKDKCKCDTCIMSAVISDKQSKLFSDCSKDYYQTFLTNDNPQCILNAPLRTDTVSTPVSGNEFLEAGEECDCGSPENPCCDAATCKLRPGAQCAEGLCCDQCRFKKKRTICRRARGDNPDDRCTGQSADCPRNGLYG.

Residues 1 to 20 (MIEVLLVTICLAVFPYQGSS) form the signal peptide. A propeptide spanning residues 21-189 (IILESGNVND…KKASQLYLTP (169 aa)) is cleaved from the precursor. Glu-190 bears the Pyrrolidone carboxylic acid (Glu) mark. The Peptidase M12B domain occupies 197-392 (RYIKLAIVVD…DNPQCILNAP (196 aa)). 296–299 (RNTI) provides a ligand contact to an L-amino acid tripeptide. 3 disulfide bridges follow: Cys-308/Cys-387, Cys-349/Cys-371, and Cys-351/Cys-354. Residue His-333 coordinates Zn(2+). Glu-334 is a catalytic residue. Positions 337 and 343 each coordinate Zn(2+). Ser-357 contributes to the an L-amino acid tripeptide binding site. Residues 393–410 (LRTDTVSTPVSGNEFLEA) constitute a propeptide that is removed on maturation. One can recognise a Disintegrin domain in the interval 400 to 481 (TPVSGNEFLE…ADCPRNGLYG (82 aa)). Cystine bridges form between Cys-414-Cys-429, Cys-416-Cys-424, Cys-423-Cys-446, Cys-437-Cys-443, Cys-442-Cys-467, and Cys-455-Cys-474. Residues 459–461 (RGD) carry the Cell attachment site motif.

This sequence belongs to the venom metalloproteinase (M12B) family. P-II subfamily. P-IIa sub-subfamily. Monomer. Zn(2+) serves as cofactor. The N-terminus is blocked. In terms of tissue distribution, expressed by the venom gland.

The protein resides in the secreted. Its activity is regulated as follows. Inhibited by EDTA and 1,10-phenanthroline. Is also inhibited by endogenous tripeptide inhibitors pyroGlu-Asn-Trp, pyroGlu-Gln-Trp, and pyroGlu-Lys-Trp. Its function is as follows. Potent fibrinogenolytic protease which cleaves mainly the Aalpha chain of fibrinogen (FGA) and slightly the Bbeta (FGB) and the gamma (FGG) chains. May possess hemorrhagic activity. Compared to other SVMP, the substrate-binding pocket is relatively shallow. Is less susceptible to tripeptide inhibitors than TM-1 (AC U3KRG1) and TM-2. Inhibits platelet aggregation induced by ADP, thrombin, platelet-activating factor and collagen. Acts by inhibiting fibrinogen interaction with platelet receptors GPIIb/GPIIIa (ITGA2B/ITGB3). The chain is Zinc metalloproteinase/disintegrin from Protobothrops mucrosquamatus (Taiwan habu).